A 426-amino-acid polypeptide reads, in one-letter code: Protein TolB homolog (426 aa).

Positions 1–19 are cleaved as a signal peptide; that stretch reads MFLRSFLCLLCLLPSILYC.

It belongs to the TolB family.

It localises to the periplasm. The polypeptide is Protein TolB homolog (Chlamydia muridarum (strain MoPn / Nigg)).